Reading from the N-terminus, the 562-residue chain is Calmodulin-binding protein 60 F (562 aa).

A disordered region spans residues 1–22; that stretch reads MENSMNNRGHGHNQEHADNLPE. The calmodulin-binding stretch occupies residues 5-84; the sequence is MNNRGHGHNQ…STSRSTEPNK (80 aa). Over residues 12 to 22 the composition is skewed to basic and acidic residues; the sequence is HNQEHADNLPE. The tract at residues 154 to 273 is DNA-binding; sequence EDDKDWTREH…ALHKKLLKSN (120 aa).

It belongs to the plant ACBP60 protein family. Interacts with calmodulin (CaM).

It localises to the nucleus. In terms of biological role, transcription activator that binds DNA in a sequence-specific manner, likely 5'-GAAATTTTGG-3', to promote the expression of target genes. The sequence is that of Calmodulin-binding protein 60 F from Arabidopsis thaliana (Mouse-ear cress).